Consider the following 456-residue polypeptide: GTP cyclohydrolase 1 (456 aa).

Zn(2+) is bound by residues cysteine 340, histidine 343, and cysteine 412.

Belongs to the GTP cyclohydrolase I family. As to quaternary structure, homodimer. Expressed in leaves and unripe fruits.

The catalysed reaction is GTP + H2O = 7,8-dihydroneopterin 3'-triphosphate + formate + H(+). It functions in the pathway cofactor biosynthesis; 7,8-dihydroneopterin triphosphate biosynthesis; 7,8-dihydroneopterin triphosphate from GTP: step 1/1. Its function is as follows. GTP cyclohydrolase 1 is the first enzyme in the biosynthetic pathway leading to folic acid. This chain is GTP cyclohydrolase 1 (GCH1), found in Solanum lycopersicum (Tomato).